The primary structure comprises 322 residues: Tubulin alpha-4 chain (322 aa).

6 residues coordinate GTP: Ser-15, Gly-19, Thr-20, Thr-54, Asn-81, and Asn-103. Glu-129 is a catalytic residue.

Belongs to the tubulin family. As to quaternary structure, dimer of alpha and beta chains. A typical microtubule is a hollow water-filled tube with an outer diameter of 25 nm and an inner diameter of 15 nM. Alpha-beta heterodimers associate head-to-tail to form protofilaments running lengthwise along the microtubule wall with the beta-tubulin subunit facing the microtubule plus end conferring a structural polarity. Microtubules usually have 13 protofilaments but different protofilament numbers can be found in some organisms and specialized cells. Mg(2+) serves as cofactor. In terms of processing, some glutamate residues at the C-terminus are polyglycylated, resulting in polyglycine chains on the gamma-carboxyl group. Glycylation is mainly limited to tubulin incorporated into axonemes (cilia and flagella) whereas glutamylation is prevalent in neuronal cells, centrioles, axonemes, and the mitotic spindle. Both modifications can coexist on the same protein on adjacent residues, and lowering polyglycylation levels increases polyglutamylation, and reciprocally. The precise function of polyglycylation is still unclear. Post-translationally, some glutamate residues at the C-terminus are polyglutamylated, resulting in polyglutamate chains on the gamma-carboxyl group. Polyglutamylation plays a key role in microtubule severing by spastin (SPAST). SPAST preferentially recognizes and acts on microtubules decorated with short polyglutamate tails: severing activity by SPAST increases as the number of glutamates per tubulin rises from one to eight, but decreases beyond this glutamylation threshold.

Its subcellular location is the cytoplasm. It is found in the cytoskeleton. The enzyme catalyses GTP + H2O = GDP + phosphate + H(+). Functionally, tubulin is the major constituent of microtubules, a cylinder consisting of laterally associated linear protofilaments composed of alpha- and beta-tubulin heterodimers. Microtubules grow by the addition of GTP-tubulin dimers to the microtubule end, where a stabilizing cap forms. Below the cap, tubulin dimers are in GDP-bound state, owing to GTPase activity of alpha-tubulin. The chain is Tubulin alpha-4 chain from Gallus gallus (Chicken).